A 123-amino-acid polypeptide reads, in one-letter code: Fluoride-specific ion channel FluC 2 (123 aa).

A run of 4 helical transmembrane segments spans residues 3-23 (LDGF…RMFI), 38-58 (ILIV…LNIT), 62-82 (LILF…SFIY), and 94-114 (LILL…FCLG). Glycine 72 and serine 75 together coordinate Na(+).

This sequence belongs to the fluoride channel Fluc/FEX (TC 1.A.43) family.

The protein resides in the cell inner membrane. It carries out the reaction fluoride(in) = fluoride(out). Its activity is regulated as follows. Na(+) is not transported, but it plays an essential structural role and its presence is essential for fluoride channel function. Functionally, fluoride-specific ion channel. Important for reducing fluoride concentration in the cell, thus reducing its toxicity. This Prochlorococcus marinus subsp. pastoris (strain CCMP1986 / NIES-2087 / MED4) protein is Fluoride-specific ion channel FluC 2.